The following is a 321-amino-acid chain: Glucan 1,3-beta-glucosidase (321 aa).

The first 21 residues, 1–21, serve as a signal peptide directing secretion; it reads MQFLSSFVFAALALLPLSAMA. N-linked (GlcNAc...) asparagine glycans are attached at residues asparagine 39 and asparagine 99. Glutamate 141 serves as the catalytic Proton donor. Asparagine 210, asparagine 213, and asparagine 237 each carry an N-linked (GlcNAc...) asparagine glycan. Glutamate 244 functions as the Nucleophile in the catalytic mechanism. N-linked (GlcNAc...) asparagine glycans are attached at residues asparagine 309 and asparagine 317.

The protein belongs to the glycosyl hydrolase 17 family.

Its subcellular location is the secreted. The protein resides in the cell wall. The enzyme catalyses Successive hydrolysis of beta-D-glucose units from the non-reducing ends of (1-&gt;3)-beta-D-glucans, releasing alpha-glucose.. Glucanases possibly play a role in cell expansion during growth, in cell-cell fusion during mating, and in spore release during sporulation. This enzyme may be involved in beta-glucan degradation and also function biosynthetically as a transglycosylase. The sequence is that of Glucan 1,3-beta-glucosidase (bgl2) from Schizosaccharomyces pombe (strain 972 / ATCC 24843) (Fission yeast).